A 710-amino-acid polypeptide reads, in one-letter code: MSKQTFTTTFAGKPLVVEVGQVAKQANGATVVRYGESTVLTAAVMSKKMATGDFFPLQVNYEEKMYAAGKFPGGFMKREGRPSTDATLTARLIDRPIRPMFAEGFRNEVQVINTVLSYDENASAPMAAMFGSSLALSISDIPFNGPIAGVQVGYIDGEFIINPDKEQMEASLLELTVAGSKEAINMVESGAKELSEDIMLEALLKGHQAIQELIAFQEQIVAVVGKEKAEVELLQVDADLQADIVAKYNAQLQKAVQVEEKKAREAATEAVKEMVKAEYEERYAEDENLATIMRDVAEILEQMEHAEVRRLITEDKIRPDGRKIDEIRPLDAVVDFLPKVHGSGLFTRGQTQALSVLTLAPMGETQIIDGLAPEYKKSFLHHYNFPQYSVGETGRYGAAGRREIGHGALGERALEQVLPSLEEFPYAIRLVAEVLESNGSSSQASICAGTLALMAGGVPIKAPVAGIAMGLISDGTNYTVLTDIQGLEDHFGDMDFKVAGTREGITALQMDIKIAGITPQILEEALAQAKKARFEILDVIEATIAEPRPELAPTAPKIDTIKIDVDKIKVVIGKGGETIDKIIAETGVKIDIDDEGNVSIYSSDQAAIDRTKEIIAGLVREAKVGEVYHAKVIRIEKFGAFVNLFDKTDALVHISEIAWTRTTNVSDVLEVGEDVDVKVIKIDEKGRVDASMKALIPRPPKPEKKEEKHD.

Mg(2+)-binding residues include D489 and D495. One can recognise a KH domain in the interval 556 to 615; it reads PKIDTIKIDVDKIKVVIGKGGETIDKIIAETGVKIDIDDEGNVSIYSSDQAAIDRTKEII. The S1 motif domain maps to 625–693; the sequence is GEVYHAKVIR…EKGRVDASMK (69 aa). The tract at residues 691–710 is disordered; that stretch reads SMKALIPRPPKPEKKEEKHD. Residues 700-710 show a composition bias toward basic and acidic residues; that stretch reads PKPEKKEEKHD.

This sequence belongs to the polyribonucleotide nucleotidyltransferase family. It depends on Mg(2+) as a cofactor.

Its subcellular location is the cytoplasm. The enzyme catalyses RNA(n+1) + phosphate = RNA(n) + a ribonucleoside 5'-diphosphate. Functionally, involved in mRNA degradation. Catalyzes the phosphorolysis of single-stranded polyribonucleotides processively in the 3'- to 5'-direction. In Streptococcus pyogenes serotype M18 (strain MGAS8232), this protein is Polyribonucleotide nucleotidyltransferase.